We begin with the raw amino-acid sequence, 160 residues long: Phosphopantetheine adenylyltransferase (160 aa).

Residue threonine 9 coordinates substrate. ATP is bound by residues 9 to 10 and histidine 17; that span reads TF. Substrate contacts are provided by lysine 41, leucine 73, and arginine 87. ATP contacts are provided by residues 88–90, glutamate 98, and 123–129; these read GLR and FSYTSSS.

It belongs to the bacterial CoaD family. As to quaternary structure, homohexamer. Requires Mg(2+) as cofactor.

It is found in the cytoplasm. It carries out the reaction (R)-4'-phosphopantetheine + ATP + H(+) = 3'-dephospho-CoA + diphosphate. It functions in the pathway cofactor biosynthesis; coenzyme A biosynthesis; CoA from (R)-pantothenate: step 4/5. Reversibly transfers an adenylyl group from ATP to 4'-phosphopantetheine, yielding dephospho-CoA (dPCoA) and pyrophosphate. This Opitutus terrae (strain DSM 11246 / JCM 15787 / PB90-1) protein is Phosphopantetheine adenylyltransferase.